Here is a 428-residue protein sequence, read N- to C-terminus: Histidine--tRNA ligase (428 aa).

It belongs to the class-II aminoacyl-tRNA synthetase family.

The protein localises to the cytoplasm. The catalysed reaction is tRNA(His) + L-histidine + ATP = L-histidyl-tRNA(His) + AMP + diphosphate + H(+). The sequence is that of Histidine--tRNA ligase from Sulfolobus acidocaldarius (strain ATCC 33909 / DSM 639 / JCM 8929 / NBRC 15157 / NCIMB 11770).